A 644-amino-acid chain; its full sequence is Threonine--tRNA ligase (644 aa).

Residues 8–70 (VKAMVITLRD…EEDGELEILT (63 aa)) enclose the TGS domain. Residues 251 to 541 (DHRKLGKELD…LTEHFAGAFP (291 aa)) are catalytic. C342, H393, and H518 together coordinate Zn(2+).

It belongs to the class-II aminoacyl-tRNA synthetase family. In terms of assembly, homodimer. Requires Zn(2+) as cofactor.

The protein resides in the cytoplasm. The catalysed reaction is tRNA(Thr) + L-threonine + ATP = L-threonyl-tRNA(Thr) + AMP + diphosphate + H(+). Its function is as follows. Catalyzes the attachment of threonine to tRNA(Thr) in a two-step reaction: L-threonine is first activated by ATP to form Thr-AMP and then transferred to the acceptor end of tRNA(Thr). Also edits incorrectly charged L-seryl-tRNA(Thr). The sequence is that of Threonine--tRNA ligase from Caldanaerobacter subterraneus subsp. tengcongensis (strain DSM 15242 / JCM 11007 / NBRC 100824 / MB4) (Thermoanaerobacter tengcongensis).